The chain runs to 397 residues: Translocase of chloroplast 34 homolog, chloroplastic (397 aa).

Residues 1-72 are disordered; it reads MAQPPRPAEE…SQPWAGLNRL (72 aa). Composition is skewed to acidic residues over residues 10 to 32 and 44 to 63; these read EYDDDVQEDEDELKEGELDDDES and AGDEEAEDDEQDEEDGDEDS. An AIG1-type G domain is found at 90-321; it reads RKQLTVLLLG…YKYHPRLSSK (232 aa). Residues 99-106 form a G1 region; it reads GKSSVGKS. GTP contacts are provided by residues 102–107 and 121–126; these read SVGKSS and QAFKLQ. A Mg(2+)-binding site is contributed by Ser106. The interval 121–124 is homodimerization; the sequence is QAFK. The interval 126–130 is G2; that stretch reads QADTD. The tract at residues 155-158 is G3; sequence DTCG. The tract at residues 193–198 is homodimerization; it reads RLDLYR. Positions 227–230 are G4; sequence THAN. GTP is bound by residues His228 and 271-272; that span reads EN. The G5 stretch occupies residues 271–273; the sequence is ENS. The helical transmembrane segment at 329–349 threads the bilayer; that stretch reads LLPVAIAAEVLFYRRFLHPRL. The AKR2A-binding sequence (ABS) required for chloroplast outer envelope membrane targeting motif lies at 350–358; it reads DDNQRRVER.

The protein belongs to the TRAFAC class TrmE-Era-EngA-EngB-Septin-like GTPase superfamily. AIG1/Toc34/Toc159-like paraseptin GTPase family. TOC34 subfamily. In terms of assembly, homodimer, heterodimer with other TOC proteins, and monomer. Part of the TOC core complex that includes 1 protein for the specific recognition of transit peptides surrounded by a ring composed of four proteins forming translocation channels, and four to five GTP-binding proteins providing energy. This core complex can interact with components of the TIC complex to form a larger import complex. Interacts with ARSA1. Requires Mg(2+) as cofactor.

It is found in the plastid. Its subcellular location is the chloroplast outer membrane. In terms of biological role, GTPase involved in protein precursor import into chloroplasts. Seems to recognize chloroplast-destined precursor proteins and regulate their presentation to the translocation channel through GTP hydrolysis. Functions as an essential component of the outer chloroplast membrane translocon (TOC) complex, which, in turn, catalyzes the import of nucleus-encoded precursor polypeptides from the cytoplasm to the chloroplast. This Chlamydomonas reinhardtii (Chlamydomonas smithii) protein is Translocase of chloroplast 34 homolog, chloroplastic.